A 1179-amino-acid chain; its full sequence is DNA-directed RNA polymerase subunit beta' (1179 aa).

C60, C62, C75, and C78 together coordinate Zn(2+). Residues D450, D452, and D454 each coordinate Mg(2+). Zn(2+) contacts are provided by C791, C865, C872, and C875.

Belongs to the RNA polymerase beta' chain family. The RNAP catalytic core consists of 2 alpha, 1 beta, 1 beta' and 1 omega subunit. When a sigma factor is associated with the core the holoenzyme is formed, which can initiate transcription. It depends on Mg(2+) as a cofactor. Zn(2+) is required as a cofactor.

It catalyses the reaction RNA(n) + a ribonucleoside 5'-triphosphate = RNA(n+1) + diphosphate. Its function is as follows. DNA-dependent RNA polymerase catalyzes the transcription of DNA into RNA using the four ribonucleoside triphosphates as substrates. This Alkaliphilus oremlandii (strain OhILAs) (Clostridium oremlandii (strain OhILAs)) protein is DNA-directed RNA polymerase subunit beta'.